Consider the following 484-residue polypeptide: MKFIVKLFPEIMMKSKPVRMRFTKMLETNIRNVLKKVDETAKVQRQWDKIMVMVPDDRPDLVEAFAERLACIPGIAHVLQVNVSTFTTVDDIYQQTLVAYKEQLAGKTFCVRVKRAGKHDFNSIEVERYVGGGLNQFTEAAGVRLKNPDMTVHLEIDNDNLYLIDKRIEGLGGFPMATQEDVLSLISGGFDSGVSSYQFIKRGSRTHYCFFNLGGDQHEIGVKQVAYHLWQKYGESHKVKFISVPFDPVVQEILERIDNGQMGVILKRMMMRAATRVAQKMGIQALVTGEAMGQVSSQTLTNLNVIDRCTEQLILRPLIAMDKQDIINISRQIGTEDFAKSIPEYCGVISQKPTVKAVLAKVEAEEAKFSEDLLDRVIADAEIIDIKEIATQMDTKITATETVDAISAGEIIIDVRAPEEEEKSPLELDGVEVKAIPFFKLATQFADLDKEKNYLLYCDRGVMSKLQALYLQEQGYNNVKVYRP.

The THUMP domain maps to 63-167; sequence EAFAERLACI…NDNLYLIDKR (105 aa). ATP is bound by residues 185–186, K267, G289, and Q298; that span reads LI. C346 and C458 are disulfide-bonded. The Rhodanese domain maps to 406 to 484; that stretch reads ISAGEIIIDV…GYNNVKVYRP (79 aa). The active-site Cysteine persulfide intermediate is C458.

Belongs to the ThiI family.

The protein resides in the cytoplasm. The catalysed reaction is [ThiI sulfur-carrier protein]-S-sulfanyl-L-cysteine + a uridine in tRNA + 2 reduced [2Fe-2S]-[ferredoxin] + ATP + H(+) = [ThiI sulfur-carrier protein]-L-cysteine + a 4-thiouridine in tRNA + 2 oxidized [2Fe-2S]-[ferredoxin] + AMP + diphosphate. It carries out the reaction [ThiS sulfur-carrier protein]-C-terminal Gly-Gly-AMP + S-sulfanyl-L-cysteinyl-[cysteine desulfurase] + AH2 = [ThiS sulfur-carrier protein]-C-terminal-Gly-aminoethanethioate + L-cysteinyl-[cysteine desulfurase] + A + AMP + 2 H(+). The protein operates within cofactor biosynthesis; thiamine diphosphate biosynthesis. Functionally, catalyzes the ATP-dependent transfer of a sulfur to tRNA to produce 4-thiouridine in position 8 of tRNAs, which functions as a near-UV photosensor. Also catalyzes the transfer of sulfur to the sulfur carrier protein ThiS, forming ThiS-thiocarboxylate. This is a step in the synthesis of thiazole, in the thiamine biosynthesis pathway. The sulfur is donated as persulfide by IscS. The sequence is that of tRNA sulfurtransferase from Shewanella pealeana (strain ATCC 700345 / ANG-SQ1).